We begin with the raw amino-acid sequence, 300 residues long: Ribonuclease HIII (300 aa).

The RNase H type-2 domain occupies 86-300 (RPRLGVDESG…FYEICDSTDI (215 aa)). A divalent metal cation contacts are provided by Asp92, Glu93, and Asp196.

This sequence belongs to the RNase HII family. RnhC subfamily. The cofactor is Mn(2+). It depends on Mg(2+) as a cofactor.

The protein resides in the cytoplasm. The enzyme catalyses Endonucleolytic cleavage to 5'-phosphomonoester.. Functionally, endonuclease that specifically degrades the RNA of RNA-DNA hybrids. This Chlamydia abortus (strain DSM 27085 / S26/3) (Chlamydophila abortus) protein is Ribonuclease HIII.